A 236-amino-acid chain; its full sequence is ATP synthase subunit a, chloroplastic (236 aa).

5 consecutive transmembrane segments (helical) span residues 25-45, 87-107, 123-143, 180-202, and 210-230; these read MHGQVLINSWIVLGLIIAFAV, FIGTLFLFIFVSNWSGALIPW, DINTTVALALLTSLTYFYAGL, LFGNILADELVVAVLVSLVPLVI, and GLFTSGIQALIFATLAGAYIG.

It belongs to the ATPase A chain family. As to quaternary structure, F-type ATPases have 2 components, CF(1) - the catalytic core - and CF(0) - the membrane proton channel. CF(1) has five subunits: alpha(3), beta(3), gamma(1), delta(1), epsilon(1). CF(0) has four main subunits: a, b, b' and c.

It is found in the plastid. It localises to the chloroplast thylakoid membrane. In terms of biological role, key component of the proton channel; it plays a direct role in the translocation of protons across the membrane. The polypeptide is ATP synthase subunit a, chloroplastic (Ostreococcus tauri).